The primary structure comprises 192 residues: Small ribosomal subunit protein uS4B (192 aa).

Ser-89 and Ser-179 each carry phosphoserine. The region spanning 107-181 is the S4 RNA-binding domain; sequence RRLQTQVFKL…CKRKRLRSQQ (75 aa). Residues 166–192 form a disordered region; sequence GGRPGRCKRKRLRSQQEGGEGEEAEEE.

Belongs to the universal ribosomal protein uS4 family. As to quaternary structure, component of the small ribosomal subunit (SSU). Mature yeast ribosomes consist of a small (40S) and a large (60S) subunit. The 40S small subunit contains 1 molecule of ribosomal RNA (18S rRNA) and at least 33 different proteins. The large 60S subunit contains 3 rRNA molecules (25S, 5.8S and 5S rRNA) and at least 46 different proteins. Interacts with snoRNA U3. uS11 interacts with MPP10. Component of the ribosomal small subunit (SSU) processome composed of at least 40 protein subunits and snoRNA U3.

Its subcellular location is the cytoplasm. Component of the ribosome, a large ribonucleoprotein complex responsible for the synthesis of proteins in the cell. The small ribosomal subunit (SSU) binds messenger RNAs (mRNAs) and translates the encoded message by selecting cognate aminoacyl-transfer RNA (tRNA) molecules. The large subunit (LSU) contains the ribosomal catalytic site termed the peptidyl transferase center (PTC), which catalyzes the formation of peptide bonds, thereby polymerizing the amino acids delivered by tRNAs into a polypeptide chain. The nascent polypeptides leave the ribosome through a tunnel in the LSU and interact with protein factors that function in enzymatic processing, targeting, and the membrane insertion of nascent chains at the exit of the ribosomal tunnel. uS4 is involved in nucleolar processing of pre-18S ribosomal RNA and ribosome assembly. This is Small ribosomal subunit protein uS4B (rps902) from Schizosaccharomyces pombe (strain 972 / ATCC 24843) (Fission yeast).